Here is a 172-residue protein sequence, read N- to C-terminus: MLAKVERIDPSELELNDKLIFINRVTKVVKGGKRMGFAALVVTGDGKNHVGIGVGKAKEVPSAISKASANAKRNLSRILLNGTTVPHEIVFKYGAAQVLLKPAAPGTGIIAGGSVRAVLESTGIKDILTKSMGCSNKANVAKATLGGLTAMRDPKTTVTKRRSSLKEEAAGG.

An S5 DRBM domain is found at 15-78; it reads LNDKLIFINR…ANAKRNLSRI (64 aa).

This sequence belongs to the universal ribosomal protein uS5 family. As to quaternary structure, part of the 30S ribosomal subunit. Contacts proteins S4 and S8.

In terms of biological role, with S4 and S12 plays an important role in translational accuracy. Its function is as follows. Located at the back of the 30S subunit body where it stabilizes the conformation of the head with respect to the body. The polypeptide is Small ribosomal subunit protein uS5 (Dehalococcoides mccartyi (strain ATCC BAA-2266 / KCTC 15142 / 195) (Dehalococcoides ethenogenes (strain 195))).